We begin with the raw amino-acid sequence, 271 residues long: Thiosulfate sulfurtransferase (271 aa).

2 Rhodanese domains span residues 21–129 (GAPE…ALDR) and 159–270 (GAAD…TPVE). Cys-230 acts as the Cysteine persulfide intermediate in catalysis.

It is found in the cytoplasm. It carries out the reaction thiosulfate + hydrogen cyanide = thiocyanate + sulfite + 2 H(+). Catalyzes the sulfur transfer reaction from thiosulfate to cyanide, thus converting cyanide to the less toxic thiocyanate. Contributes to P.aeruginosa survival under cyanogenic conditions, and thus provides the bacterium with a defense mechanism against endogenous cyanide toxicity. Is the main cytoplasmic rhodanese in P.aeruginosa, accounting for 90% of total rhodanese activity. The polypeptide is Thiosulfate sulfurtransferase (Pseudomonas aeruginosa (strain ATCC 15692 / DSM 22644 / CIP 104116 / JCM 14847 / LMG 12228 / 1C / PRS 101 / PAO1)).